Consider the following 400-residue polypeptide: Protein transport protein HofC homolog (400 aa).

A run of 3 helical transmembrane segments spans residues 165 to 185 (YPII…HFVL), 209 to 229 (LADF…LLAI), and 370 to 390 (LLII…LPIF).

Belongs to the GSP F family.

The protein resides in the cell inner membrane. This Escherichia coli (strain K12) protein is Protein transport protein HofC homolog (hofC).